The following is a 363-amino-acid chain: S-methylmethionine--homocysteine S-methyltransferase BHMT2 (363 aa).

A Hcy-binding domain is found at 11-305 (KGILERLDSG…YHIRAIAEEL (295 aa)). Residues cysteine 208, cysteine 290, and cysteine 291 each coordinate Zn(2+). A Phosphoserine modification is found at serine 321.

Homotetramer. The cofactor is Zn(2+). In terms of tissue distribution, expressed in fetal heart, lung, liver, kidney and eye.

It catalyses the reaction S-methyl-L-methionine + L-homocysteine = 2 L-methionine + H(+). It functions in the pathway amino-acid biosynthesis; L-methionine biosynthesis via de novo pathway; L-methionine from L-homocysteine (BhmT route): step 1/1. Involved in the regulation of homocysteine metabolism. Converts homocysteine to methionine using S-methylmethionine (SMM) as a methyl donor. The polypeptide is S-methylmethionine--homocysteine S-methyltransferase BHMT2 (Bhmt2) (Mus musculus (Mouse)).